A 137-amino-acid polypeptide reads, in one-letter code: 6,7-dimethyl-8-ribityllumazine synthase (137 aa).

Residues Phe11, 43-45, and 67-69 each bind 5-amino-6-(D-ribitylamino)uracil; these read SFD and CVI. Residue 72-73 participates in (2S)-2-hydroxy-3-oxobutyl phosphate binding; that stretch reads DT. His75 acts as the Proton donor in catalysis. Leu100 is a binding site for 5-amino-6-(D-ribitylamino)uracil. Residue Arg115 coordinates (2S)-2-hydroxy-3-oxobutyl phosphate.

This sequence belongs to the DMRL synthase family. As to quaternary structure, forms an icosahedral capsid composed of 60 subunits, arranged as a dodecamer of pentamers.

It catalyses the reaction (2S)-2-hydroxy-3-oxobutyl phosphate + 5-amino-6-(D-ribitylamino)uracil = 6,7-dimethyl-8-(1-D-ribityl)lumazine + phosphate + 2 H2O + H(+). The protein operates within cofactor biosynthesis; riboflavin biosynthesis; riboflavin from 2-hydroxy-3-oxobutyl phosphate and 5-amino-6-(D-ribitylamino)uracil: step 1/2. Functionally, catalyzes the formation of 6,7-dimethyl-8-ribityllumazine by condensation of 5-amino-6-(D-ribitylamino)uracil with 3,4-dihydroxy-2-butanone 4-phosphate. This is the penultimate step in the biosynthesis of riboflavin. This Methanococcus maripaludis (strain C6 / ATCC BAA-1332) protein is 6,7-dimethyl-8-ribityllumazine synthase.